A 268-amino-acid polypeptide reads, in one-letter code: Tryptophan synthase alpha chain (268 aa).

Residues E49 and D60 each act as proton acceptor in the active site.

This sequence belongs to the TrpA family. Tetramer of two alpha and two beta chains.

It carries out the reaction (1S,2R)-1-C-(indol-3-yl)glycerol 3-phosphate + L-serine = D-glyceraldehyde 3-phosphate + L-tryptophan + H2O. The protein operates within amino-acid biosynthesis; L-tryptophan biosynthesis; L-tryptophan from chorismate: step 5/5. The alpha subunit is responsible for the aldol cleavage of indoleglycerol phosphate to indole and glyceraldehyde 3-phosphate. The chain is Tryptophan synthase alpha chain from Shigella boydii serotype 4 (strain Sb227).